The sequence spans 193 residues: Ion-translocating oxidoreductase complex subunit A (193 aa).

6 helical membrane-spanning segments follow: residues 5-25 (FLLF…FLGL), 39-59 (IGMG…SWLV), 62-82 (FILL…LVIA), 102-122 (LLGI…VALL), 134-154 (AIYG…FAAI), and 171-191 (SIGL…SGLV).

It belongs to the NqrDE/RnfAE family. The complex is composed of six subunits: RnfA, RnfB, RnfC, RnfD, RnfE and RnfG.

It is found in the cell inner membrane. In terms of biological role, part of a membrane-bound complex that couples electron transfer with translocation of ions across the membrane. This Photorhabdus laumondii subsp. laumondii (strain DSM 15139 / CIP 105565 / TT01) (Photorhabdus luminescens subsp. laumondii) protein is Ion-translocating oxidoreductase complex subunit A.